The primary structure comprises 216 residues: MADFKIVISDPQAPKEETVVKVKVVGDPEIKFDENVKEGFELPILKMNSKTAEKIKAVHGVATIRMYKPGTKDKVKITGKIIVDDNIPENEVRVNAEQLVNATGTNELEGELFRARAWQIRINDDRTKLLIGLKIGDEFDGSIVGLKNVKLKIRGGSDNSGFPMRPDVMGGVKKRVLLSGPPGFHPREKGERRRKMIRGNTITEDIVQINTVIKYV.

Belongs to the eukaryotic ribosomal protein eS6 family.

The protein is Small ribosomal subunit protein eS6 of Staphylothermus marinus (strain ATCC 43588 / DSM 3639 / JCM 9404 / F1).